We begin with the raw amino-acid sequence, 430 residues long: tRNA(Ile)-lysidine synthase (430 aa).

24-29 lines the ATP pocket; that stretch reads SGGLDS.

It belongs to the tRNA(Ile)-lysidine synthase family.

Its subcellular location is the cytoplasm. The catalysed reaction is cytidine(34) in tRNA(Ile2) + L-lysine + ATP = lysidine(34) in tRNA(Ile2) + AMP + diphosphate + H(+). Its function is as follows. Ligates lysine onto the cytidine present at position 34 of the AUA codon-specific tRNA(Ile) that contains the anticodon CAU, in an ATP-dependent manner. Cytidine is converted to lysidine, thus changing the amino acid specificity of the tRNA from methionine to isoleucine. The polypeptide is tRNA(Ile)-lysidine synthase (Haemophilus influenzae (strain 86-028NP)).